A 219-amino-acid chain; its full sequence is Glutathione S-transferase-like protein LUC7 (219 aa).

Residues 3-84 enclose the GST N-terminal domain; sequence PFGRLYSFMP…YLAQSGPYSE (82 aa). The GST C-terminal domain occupies 90-219; that stretch reads DAATSAKIRQ…NLIDVKRVHE (130 aa).

It belongs to the GST superfamily.

Functionally, glutathione S-transferase-like protein; part of the gene cluster that mediates the biosynthesis of the mycotoxin lucilactaene and the lucilactaene-related compound NG-391 that act as cell cycle inhibitors with potent growth inhibitory activity against malarial parasites, moderate growth inhibitory activity against cancer cells, and no activity against bacteria and fungi. Within the cluster, LUC7 and LUC8 encode proteins which are not commonly involved in the biosynthesis of secondary metabolites and are not essential for lucilactaene biosynthesis. The protein is Glutathione S-transferase-like protein LUC7 of Fusarium sp.